The sequence spans 195 residues: RFKKIRRLGALPGLTSKRPRSGSDLKNQLRSGKRSQYRIRLEEKQKLRFHYGLTERQLLKYVHIAGKAKGSTGQILLQLLEMRLDNILFRLGMASTIPGARQLVNHRHILVNGRIVDIPSYRCKPRDIITTKNKQRSKALIQNFIASSPHQEELPNHLTIDPFQYKGLVNQIIDSKWIGLKINELLVVEYYSRQT.

The region spanning 82–143 (MRLDNILFRL…KQRSKALIQN (62 aa)) is the S4 RNA-binding domain.

The protein belongs to the universal ribosomal protein uS4 family. As to quaternary structure, part of the 30S ribosomal subunit. Contacts protein S5. The interaction surface between S4 and S5 is involved in control of translational fidelity.

Its subcellular location is the plastid. The protein localises to the chloroplast. Functionally, one of the primary rRNA binding proteins, it binds directly to 16S rRNA where it nucleates assembly of the body of the 30S subunit. Its function is as follows. With S5 and S12 plays an important role in translational accuracy. This chain is Small ribosomal subunit protein uS4c (rps4), found in Gladiolus murielae (Abyssinian gladiolus).